We begin with the raw amino-acid sequence, 137 residues long: Small heat shock protein IbpA (137 aa).

The 110-residue stretch at 28 to 137 folds into the sHSP domain; sequence SQSNGGYPPY…ANKPRRIEIN (110 aa).

This sequence belongs to the small heat shock protein (HSP20) family. As to quaternary structure, monomer. Forms homomultimers of about 100-150 subunits at optimal growth temperatures. Conformation changes to monomers at high temperatures or high ionic concentrations.

It is found in the cytoplasm. Functionally, associates with aggregated proteins, together with IbpB, to stabilize and protect them from irreversible denaturation and extensive proteolysis during heat shock and oxidative stress. Aggregated proteins bound to the IbpAB complex are more efficiently refolded and reactivated by the ATP-dependent chaperone systems ClpB and DnaK/DnaJ/GrpE. Its activity is ATP-independent. This Citrobacter koseri (strain ATCC BAA-895 / CDC 4225-83 / SGSC4696) protein is Small heat shock protein IbpA.